Here is a 493-residue protein sequence, read N- to C-terminus: Hexokinase (493 aa).

Residues 27–481 (EELSWRINKF…SGKGAAITAA (455 aa)) enclose the Hexokinase domain. Residues 91–239 (TGQEKGTYYA…AIPAKVCCVL (149 aa)) are hexokinase small subdomain. 102–107 (DFGGTN) serves as a coordination point for ATP. Residues 177 to 203 (SVGFTFSFPCTSPSINCSILIDWTKGF) are glucose-binding. The hexokinase large subdomain stretch occupies residues 240-470 (NDAVGTLMSC…ENLIIIPADD (231 aa)).

It belongs to the hexokinase family.

It carries out the reaction a D-hexose + ATP = a D-hexose 6-phosphate + ADP + H(+). The enzyme catalyses D-mannose + ATP = D-mannose 6-phosphate + ADP + H(+). It catalyses the reaction D-fructose + ATP = D-fructose 6-phosphate + ADP + H(+). The catalysed reaction is D-glucose + ATP = D-glucose 6-phosphate + ADP + H(+). It functions in the pathway carbohydrate metabolism; hexose metabolism. The protein operates within carbohydrate degradation; glycolysis; D-glyceraldehyde 3-phosphate and glycerone phosphate from D-glucose: step 1/4. In terms of biological role, catalyzes the phosphorylation of various hexoses to hexose 6-phosphate. This Plasmodium falciparum protein is Hexokinase (HK).